Here is a 58-residue protein sequence, read N- to C-terminus: Photosystem II reaction center protein K (58 aa).

Residues 1–21 constitute a propeptide that is removed on maturation; sequence MFDLYLKNLLDLSDSGTVVLA. The helical transmembrane segment at 29-49 threads the bilayer; sequence IFDPIVDVLPVIPVFFLLLAF.

It belongs to the PsbK family. PSII is composed of 1 copy each of membrane proteins PsbA, PsbB, PsbC, PsbD, PsbE, PsbF, PsbH, PsbI, PsbJ, PsbK, PsbL, PsbM, PsbT, PsbX, PsbY, PsbZ, Psb30/Ycf12, at least 3 peripheral proteins of the oxygen-evolving complex and a large number of cofactors. It forms dimeric complexes.

The protein localises to the plastid. It is found in the chloroplast thylakoid membrane. Functionally, one of the components of the core complex of photosystem II (PSII). PSII is a light-driven water:plastoquinone oxidoreductase that uses light energy to abstract electrons from H(2)O, generating O(2) and a proton gradient subsequently used for ATP formation. It consists of a core antenna complex that captures photons, and an electron transfer chain that converts photonic excitation into a charge separation. This Zygnema circumcarinatum (Green alga) protein is Photosystem II reaction center protein K.